The primary structure comprises 97 residues: Co-chaperonin GroES (97 aa).

The protein belongs to the GroES chaperonin family. Heptamer of 7 subunits arranged in a ring. Interacts with the chaperonin GroEL.

The protein resides in the cytoplasm. In terms of biological role, together with the chaperonin GroEL, plays an essential role in assisting protein folding. The GroEL-GroES system forms a nano-cage that allows encapsulation of the non-native substrate proteins and provides a physical environment optimized to promote and accelerate protein folding. GroES binds to the apical surface of the GroEL ring, thereby capping the opening of the GroEL channel. The protein is Co-chaperonin GroES of Klebsiella pneumoniae (strain 342).